We begin with the raw amino-acid sequence, 1531 residues long: Lysophospholipase nte1 (1531 aa).

Over 1–72 (MATGDGIIAA…TPPAPSTMVG (72 aa)) the chain is Cytoplasmic. A helical transmembrane segment spans residues 73 to 93 (WIGWIFSFIFQVIPSVLYWIV). The Lumenal portion of the chain corresponds to 94–115 (TFTTITLPTWLFTLFSMSLTFT). A helical membrane pass occupies residues 116–136 (MNFTTLLLIALAVVSTISWFI). The Cytoplasmic portion of the chain corresponds to 137-1531 (RYRFLNMYSR…RTLAPRRASI (1395 aa)). 3 disordered regions span residues 242–265 (GSDE…PDGR), 303–385 (ASSA…TRRK), and 766–789 (NTSS…KQSR). Positions 325 to 343 (REMDDSPHVYQGDRLDPAS) are enriched in basic and acidic residues. Residues 689 to 809 (GGTS…AVAS) and 849 to 969 (RLTS…IAQR) each bind a nucleoside 3',5'-cyclic phosphate. Residues 768–779 (SSSRVSGSAAAA) are compositionally biased toward low complexity. One can recognise a PNPLA domain in the interval 1228–1392 (LVLGGGGARG…IDNLTVDHMK (165 aa)). The GXGXXG signature appears at 1232–1237 (GGGARG). A GXSXG motif is present at residues 1259–1263 (GTSIG). Residue Ser1261 is the Nucleophile of the active site. The Proton acceptor role is filled by Asp1379. A DGA/G motif is present at residues 1379–1381 (DGG). Positions 1510-1531 (LPEETEEKKKLQRTLAPRRASI) are disordered.

Belongs to the NTE family.

The protein resides in the endoplasmic reticulum membrane. The catalysed reaction is a 1-acyl-sn-glycero-3-phosphocholine + H2O = sn-glycerol 3-phosphocholine + a fatty acid + H(+). Inhibited by organophosphorus esters. Functionally, intracellular phospholipase B that catalyzes the double deacylation of phosphatidylcholine (PC) to glycerophosphocholine (GroPCho). Plays an important role in membrane lipid homeostasis. Responsible for the rapid PC turnover in response to inositol, elevated temperatures, or when choline is present in the growth medium. The sequence is that of Lysophospholipase nte1 (nte1) from Aspergillus niger (strain ATCC MYA-4892 / CBS 513.88 / FGSC A1513).